A 146-amino-acid polypeptide reads, in one-letter code: Globin-2B (146 aa).

In terms of domain architecture, Globin spans 9 to 146 (QLTADVKKDL…KLVGVVQAAL (138 aa)). Position 101 (histidine 101) interacts with heme b.

This sequence belongs to the globin family. As to quaternary structure, homodimer.

This Anadara trapezia (Sydney cockle) protein is Globin-2B.